Here is a 471-residue protein sequence, read N- to C-terminus: Alkaline phosphatase (471 aa).

Residues 1 to 21 (MKQSTIALALLPLLFTPVTKA) form the signal peptide. Asp73 lines the Mg(2+) pocket. Asp73 contacts Zn(2+). Catalysis depends on Ser124, which acts as the Phosphoserine intermediate. Mg(2+)-binding residues include Asp175 and Thr177. Intrachain disulfides connect Cys190–Cys200 and Cys308–Cys358. Glu344 provides a ligand contact to Mg(2+). Zn(2+)-binding residues include Asp349, His353, Asp391, His392, and His434.

This sequence belongs to the alkaline phosphatase family. As to quaternary structure, isozymes 1 and 3 are a dimer of identical chains, isozyme 2 is a dimer of heterogeneous chains, one of each of the subunits from isozymes 1 and 3. The cofactor is Mg(2+). It depends on Zn(2+) as a cofactor.

The protein localises to the periplasm. It carries out the reaction a phosphate monoester + H2O = an alcohol + phosphate. The polypeptide is Alkaline phosphatase (phoA) (Escherichia coli (strain K12)).